The sequence spans 209 residues: Urease accessory protein UreG (209 aa).

Residue Gly10–Thr17 coordinates GTP.

The protein belongs to the SIMIBI class G3E GTPase family. UreG subfamily. As to quaternary structure, homodimer. UreD, UreF and UreG form a complex that acts as a GTP-hydrolysis-dependent molecular chaperone, activating the urease apoprotein by helping to assemble the nickel containing metallocenter of UreC. The UreE protein probably delivers the nickel.

It is found in the cytoplasm. Facilitates the functional incorporation of the urease nickel metallocenter. This process requires GTP hydrolysis, probably effectuated by UreG. This chain is Urease accessory protein UreG, found in Lysinibacillus sphaericus (strain C3-41).